Here is a 361-residue protein sequence, read N- to C-terminus: NudC domain-containing protein 3 (361 aa).

A compositionally biased stretch (basic and acidic residues) spans 87-97 (KIRRKEEEEAK). Disordered regions lie at residues 87–106 (KIRR…AAEK) and 124–158 (LDGH…VAGA). Position 146 is a phosphoserine (serine 146). Over residues 148–158 (EAEAPGAVAGA) the composition is skewed to low complexity. One can recognise a CS domain in the interval 185 to 277 (AVRENYTWSQ…VGEYWWNAIL (93 aa)). Serine 340 and serine 355 each carry phosphoserine.

This chain is NudC domain-containing protein 3 (NUDCD3), found in Homo sapiens (Human).